The following is a 1038-amino-acid chain: Elongation factor 3 (1038 aa).

HEAT repeat units follow at residues 93 to 131 (EAYLLPLLSVFLDLLGDKKPTVRPVAQEAALTIISSANK), 133 to 170 (STIRILPILFDGLDRSKKWQTKKGALDLIAELSKVAPY), 174 to 211 (RCLPDIIPQVTDCMWDTRKEVKVAARDTMTKVCNVVGN), 213 to 249 (DIEPFIPALVSCLANPTEVPECTHKLASTTFVKTVEA), 255 to 287 (MEPLLKRALAEGKTAVKRQAAVIIDNMCKLMDD), and 292 to 331 (QLFIPKLLPGLKKVIETQADPECREVATRAHETLFVAGGS). Glutamate 406 contributes to the ADP binding site. 2 ABC transporter domains span residues 426–654 (IFIE…YYEL) and 680–995 (IRLT…EEVT). ADP is bound by residues asparagine 716, glutamate 924, asparagine 927, and histidine 953. The interval 1012 to 1038 (RKEKKAKDKARKEAEARGEYYSDSDEE) is disordered. Over residues 1021-1031 (ARKEAEARGEY) the composition is skewed to basic and acidic residues.

This sequence belongs to the ABC transporter superfamily. ABCF family. EF3 subfamily. Monomer.

It localises to the cytoplasm. It catalyses the reaction ATP + H2O = ADP + phosphate + H(+). It functions in the pathway protein biosynthesis; polypeptide chain elongation. Functionally, ribosome-dependent ATPase that functions in cytoplasmic translation elongation. Required for the ATP-dependent release of deacylated tRNA from the ribosomal E-site during protein biosynthesis. Stimulates the eEF1A-dependent binding of aminoacyl-tRNA to the ribosomal A-site, which has reduced affinity for tRNA as long as the E-site is occupied. Assists translation termination by stimulating the release of nascent protein from the ribosome by release factors. This is Elongation factor 3 from Phytophthora infestans (strain T30-4) (Potato late blight agent).